We begin with the raw amino-acid sequence, 92 residues long: Small ribosomal subunit protein uS19 (92 aa).

Belongs to the universal ribosomal protein uS19 family.

Functionally, protein S19 forms a complex with S13 that binds strongly to the 16S ribosomal RNA. The polypeptide is Small ribosomal subunit protein uS19 (Borreliella afzelii (strain PKo) (Borrelia afzelii)).